The primary structure comprises 229 residues: Probable endo-1,4-beta-xylanase A (229 aa).

An N-terminal signal peptide occupies residues 1-18 (MVSFKYLFLAASALGALA). N-linked (GlcNAc...) asparagine glycans are attached at residues asparagine 30 and asparagine 100. One can recognise a GH11 domain in the interval 41-229 (AGTPSSTGWN…SSGSSSITVY (189 aa)). The Nucleophile role is filled by glutamate 125. Glutamate 216 serves as the catalytic Proton donor.

The protein belongs to the glycosyl hydrolase 11 (cellulase G) family.

It is found in the secreted. The enzyme catalyses Endohydrolysis of (1-&gt;4)-beta-D-xylosidic linkages in xylans.. Its pathway is glycan degradation; xylan degradation. Its function is as follows. Endo-1,4-beta-xylanase involved in the hydrolysis of xylan, a major structural heterogeneous polysaccharide found in plant biomass representing the second most abundant polysaccharide in the biosphere, after cellulose. The protein is Probable endo-1,4-beta-xylanase A (xlnA) of Aspergillus clavatus (strain ATCC 1007 / CBS 513.65 / DSM 816 / NCTC 3887 / NRRL 1 / QM 1276 / 107).